We begin with the raw amino-acid sequence, 170 residues long: Ribosome maturation factor RimM (170 aa).

The 74-residue stretch at 97–170 folds into the PRC barrel domain; the sequence is KPDEYYWVDL…LVVVDWDPEF (74 aa).

This sequence belongs to the RimM family. In terms of assembly, binds ribosomal protein uS19.

The protein resides in the cytoplasm. In terms of biological role, an accessory protein needed during the final step in the assembly of 30S ribosomal subunit, possibly for assembly of the head region. Essential for efficient processing of 16S rRNA. May be needed both before and after RbfA during the maturation of 16S rRNA. It has affinity for free ribosomal 30S subunits but not for 70S ribosomes. In Stenotrophomonas maltophilia (strain K279a), this protein is Ribosome maturation factor RimM.